A 346-amino-acid polypeptide reads, in one-letter code: Guanine nucleotide-binding protein subunit beta-2 (346 aa).

7 WD repeats span residues 57–96 (GHINKVNSVHFAGDSRHCVTGSLDGKLIIWDTWTANKVQV), 99–138 (LRSAWVMTVAFSPSGNFVACGGMDNQCTVYDVNNRDASGV), 147–185 (GYEGFLSSCRFLDDTHLITGSGDMKICHWDLEKGVKTMD), 188–227 (GHAGDIAGLSLSPDMNTYITGSVDKTAKLWDVREETHKQM), 230–269 (GHEMDVNSVCYHPSGNGFASASEDQTARLYDIRADQQIAL), 274–313 (QKNTGFTSCALSTSGRYLLCSGIEGNIHSFDTMKVCHNGM), and 316–346 (GHENRITCISLSPNGMCLASTSWDQQVRLWL).

This sequence belongs to the WD repeat G protein beta family. As to quaternary structure, g proteins are composed of 3 units, alpha, beta and gamma. Interacts with Ggammae/Guanine nucleotide-binding protein subunit gamma-e.

Its function is as follows. Guanine nucleotide-binding proteins (G proteins) are involved as modulators or transducers in various transmembrane signaling systems. The beta and gamma chains are required for the GTPase activity, for replacement of GDP by GTP, and for G protein-effector interaction. This is Guanine nucleotide-binding protein subunit beta-2 from Calliphora vicina (Blue blowfly).